Consider the following 533-residue polypeptide: Di/tripeptide-binding protein 4 (533 aa).

A signal peptide spans Met-1–Ala-25.

The protein belongs to the bacterial solute-binding protein 5 family. The complex is composed of two ATP-binding proteins (DppD and DppF), two transmembrane proteins (DppB and DppC) and a solute-binding protein (DppA4). Five orthologous SBPs (DppA1-A5) are present in P.aeruginosa, which increases the substrate specificity of the DppBCDF transporter.

In terms of biological role, part of the ABC transporter DppABCDF involved in the uptake of various di/tripeptides. Prefers dipeptides with acidic residues at the C-terminal end. Efficiently uses tripeptides. This chain is Di/tripeptide-binding protein 4, found in Pseudomonas aeruginosa (strain UCBPP-PA14).